The sequence spans 118 residues: Large ribosomal subunit protein uL18 (118 aa).

It belongs to the universal ribosomal protein uL18 family. Part of the 50S ribosomal subunit; part of the 5S rRNA/L5/L18/L25 subcomplex. Contacts the 5S and 23S rRNAs.

This is one of the proteins that bind and probably mediate the attachment of the 5S RNA into the large ribosomal subunit, where it forms part of the central protuberance. The sequence is that of Large ribosomal subunit protein uL18 from Rickettsia bellii (strain OSU 85-389).